An 833-amino-acid chain; its full sequence is Probable glucan 1,3-beta-glucosidase D (833 aa).

Over residues 1–33 (MPTHSRSRDRYGGRDSDREARYDYDYARRRYAT) the composition is skewed to basic and acidic residues. Residues 1-228 (MPTHSRSRDR…RKRQKKLAVV (228 aa)) form a disordered region. Topologically, residues 1–305 (MPTHSRSRDR…GGRPFWKRKR (305 aa)) are cytoplasmic. The segment covering 34–45 (DDDDDYDDDELE) has biased composition (acidic residues). Basic and acidic residues-rich tracts occupy residues 46–75 (HDLT…RDAE) and 97–172 (YGDD…ETAA). Over residues 183–196 (SASHLLSADALAKL) the composition is skewed to low complexity. Residues 200-217 (YEKEERRKREIAKDAAKA) are compositionally biased toward basic and acidic residues. The chain crosses the membrane as a helical; Signal-anchor for type II membrane protein span at residues 306–326 (WIGLGALIIILVIVIPVAVVV). At 327–833 (SKKHDNKSDP…PDFGDLPEYY (507 aa)) the chain is on the extracellular side. Residues 331 to 353 (DNKSDPADSQGTSPGKSNLDGLS) form a disordered region. Residue Asn-332 is glycosylated (N-linked (GlcNAc...) asparagine). A compositionally biased stretch (polar residues) spans 337 to 346 (ADSQGTSPGK). Asn-378, Asn-383, Asn-395, Asn-548, Asn-560, and Asn-569 each carry an N-linked (GlcNAc...) asparagine glycan. The active-site Proton donor is Glu-599. 3 N-linked (GlcNAc...) asparagine glycosylation sites follow: Asn-638, Asn-671, and Asn-691. The active-site Nucleophile is the Glu-704.

Belongs to the glycosyl hydrolase 5 (cellulase A) family.

It localises to the cell membrane. The enzyme catalyses Successive hydrolysis of beta-D-glucose units from the non-reducing ends of (1-&gt;3)-beta-D-glucans, releasing alpha-glucose.. Its function is as follows. Glucosidase involved in the degradation of cellulosic biomass. Active on lichenan. The protein is Probable glucan 1,3-beta-glucosidase D (exgD) of Aspergillus fumigatus (strain CBS 144.89 / FGSC A1163 / CEA10) (Neosartorya fumigata).